A 556-amino-acid polypeptide reads, in one-letter code: Phosphoenolpyruvate-protein phosphotransferase (556 aa).

The active-site Tele-phosphohistidine intermediate is His186. 2 residues coordinate phosphoenolpyruvate: Arg288 and Arg325. Mg(2+) contacts are provided by Glu415 and Asp439. Phosphoenolpyruvate contacts are provided by residues 438–439 (ND) and Arg449. Cys486 functions as the Proton donor in the catalytic mechanism.

Belongs to the PEP-utilizing enzyme family. In terms of assembly, homodimer. It depends on Mg(2+) as a cofactor.

It localises to the cytoplasm. The catalysed reaction is L-histidyl-[protein] + phosphoenolpyruvate = N(pros)-phospho-L-histidyl-[protein] + pyruvate. Functionally, general (non sugar-specific) component of the phosphoenolpyruvate-dependent sugar phosphotransferase system (sugar PTS). This major carbohydrate active-transport system catalyzes the phosphorylation of incoming sugar substrates concomitantly with their translocation across the cell membrane. Enzyme I transfers the phosphoryl group from phosphoenolpyruvate (PEP) to the phosphoryl carrier protein (HPr). This is Phosphoenolpyruvate-protein phosphotransferase (ptsI) from Streptomyces coelicolor (strain ATCC BAA-471 / A3(2) / M145).